A 135-amino-acid chain; its full sequence is Crustacean hyperglycemic hormones A* (135 aa).

Positions 1-26 (MVSFRTMWSVVVVVVVASLASSGVQG) are cleaved as a signal peptide. Pyrrolidone carboxylic acid is present on Q62. Intrachain disulfides connect C68–C104, C84–C100, and C87–C113. Valine amide is present on V133.

The protein belongs to the arthropod CHH/MIH/GIH/VIH hormone family. In terms of tissue distribution, produced by the medulla terminalis X-organ in the eyestalks and transported to the sinus gland where they are stored and released.

The protein localises to the secreted. Functionally, hormone found in the sinus gland of isopods and decapods which controls the blood sugar level. Has a secretagogue action over the amylase released from the midgut gland. May act as a stress hormone and may be involved in the control of molting and reproduction. The protein is Crustacean hyperglycemic hormones A* (CHHA*) of Faxonius limosus (Spinycheek crayfish).